The chain runs to 250 residues: AA9 family lytic polysaccharide monooxygenase E (250 aa).

An N-terminal signal peptide occupies residues 1–21 (MAMSKIMSLTGLLASASLVAG). Cu(2+) is bound by residues histidine 22 and histidine 107. Cystine bridges form between cysteine 77/cysteine 199 and cysteine 118/cysteine 122. N-linked (GlcNAc...) asparagine glycosylation is present at asparagine 159. O2-binding residues include histidine 185 and glutamine 194. Tyrosine 196 serves as a coordination point for Cu(2+).

This sequence belongs to the polysaccharide monooxygenase AA9 family. The cofactor is Cu(2+).

It is found in the secreted. It carries out the reaction [(1-&gt;4)-beta-D-glucosyl]n+m + reduced acceptor + O2 = 4-dehydro-beta-D-glucosyl-[(1-&gt;4)-beta-D-glucosyl]n-1 + [(1-&gt;4)-beta-D-glucosyl]m + acceptor + H2O.. Functionally, lytic polysaccharide monooxygenase (LPMO) that depolymerizes crystalline and amorphous polysaccharides via the oxidation of scissile alpha- or beta-(1-4)-glycosidic bonds, yielding C1 or C4 oxidation products. Catalysis by LPMOs requires the reduction of the active-site copper from Cu(II) to Cu(I) by a reducing agent and H(2)O(2) or O(2) as a cosubstrate. This chain is AA9 family lytic polysaccharide monooxygenase E, found in Aspergillus tamarii.